Consider the following 126-residue polypeptide: Aspartate 1-decarboxylase (126 aa).

The active-site Schiff-base intermediate with substrate; via pyruvic acid is Ser-25. Residue Ser-25 is modified to Pyruvic acid (Ser). Thr-57 contributes to the substrate binding site. The Proton donor role is filled by Tyr-58. 73–75 serves as a coordination point for substrate; sequence GAA.

The protein belongs to the PanD family. In terms of assembly, heterooctamer of four alpha and four beta subunits. Requires pyruvate as cofactor. Is synthesized initially as an inactive proenzyme, which is activated by self-cleavage at a specific serine bond to produce a beta-subunit with a hydroxyl group at its C-terminus and an alpha-subunit with a pyruvoyl group at its N-terminus.

It is found in the cytoplasm. It carries out the reaction L-aspartate + H(+) = beta-alanine + CO2. It functions in the pathway cofactor biosynthesis; (R)-pantothenate biosynthesis; beta-alanine from L-aspartate: step 1/1. Functionally, catalyzes the pyruvoyl-dependent decarboxylation of aspartate to produce beta-alanine. This chain is Aspartate 1-decarboxylase, found in Pseudomonas aeruginosa (strain LESB58).